A 1070-amino-acid chain; its full sequence is DNA-directed RNA polymerase subunit beta (1070 aa).

This sequence belongs to the RNA polymerase beta chain family. As to quaternary structure, in plastids the minimal PEP RNA polymerase catalytic core is composed of four subunits: alpha, beta, beta', and beta''. When a (nuclear-encoded) sigma factor is associated with the core the holoenzyme is formed, which can initiate transcription.

The protein resides in the plastid. It is found in the chloroplast. It catalyses the reaction RNA(n) + a ribonucleoside 5'-triphosphate = RNA(n+1) + diphosphate. Functionally, DNA-dependent RNA polymerase catalyzes the transcription of DNA into RNA using the four ribonucleoside triphosphates as substrates. In Lotus japonicus (Lotus corniculatus var. japonicus), this protein is DNA-directed RNA polymerase subunit beta.